The sequence spans 290 residues: Membrane protein insertase YidC 1 (290 aa).

The N-terminal stretch at 1–19 (MKKKALLPLFLGIMIFLAG) is a signal peptide. Cys20 is lipidated: N-palmitoyl cysteine. Residue Cys20 is the site of S-diacylglycerol cysteine attachment. Transmembrane regions (helical) follow at residues 56-76 (FGLA…PFML), 134-154 (MLGC…YFVL), 176-196 (PDIW…VVSS), 211-231 (MVIS…ALGL), and 232-252 (YWSV…IYYS). The segment at 270-290 (HNPYSKKKGKNTQVVSKKNKK) is disordered. A compositionally biased stretch (polar residues) spans 280 to 290 (NTQVVSKKNKK).

Belongs to the OXA1/ALB3/YidC family. Type 2 subfamily.

The protein localises to the cell membrane. In terms of biological role, required for the insertion and/or proper folding and/or complex formation of integral membrane proteins into the membrane. Involved in integration of membrane proteins that insert both dependently and independently of the Sec translocase complex, as well as at least some lipoproteins. This is Membrane protein insertase YidC 1 from Staphylococcus epidermidis (strain ATCC 12228 / FDA PCI 1200).